Reading from the N-terminus, the 752-residue chain is MASIGSQVRKAASSIDPIVTDYAVGYFNHLSGITFDAVQSKQVDLSTEVQFVSDLLIDAGASKAKVKELSESILKQLTTQLKENEAKLELTGDTSKRLLDINVLKSHNSKSDINVSLSMLGVNGDIEHTGRKMETRVDLKKLAKAEQKIAKKVAKRNNKFVKYEASKLINDQKEEDYDSFFLQINPLEFGSSAGKSKDIHIDTFDLYVGDGQRILSNAQLTLSFGHRYGLVGQNGIGKSTLLRALSRRELNVPKHVSILHVEQELRGDDTKALQSVLDADVWRKQLLSEEAKINERLKEMDVLRQEFEEDSLEVKKLDNEREDLDNHLIQISDKLVDMESDKAEARAASILYGLGFSTEAQQQPTNSFSGGWRMRLSLARALFCQPDLLLLDEPSNMLDVPSIAYLAEYLKTYPNTVLTVSHDRAFLNEVATDIIYQHNERLDYYRGQDFDTFYTTKEERRKNAQREYDNQMVYRKHLQEFIDKYRYNAAKSQEAQSRIKKLEKLPVLEPPEQDKTIDFKFPECDKLSPPIIQLQDVSFGYDENNLLLKDVNLDVQMDSRIALVGANGCGKTTLLKIMMEQLRPLKGFVSRNPRLRIGYFTQHHVDSMDLTTSAVDWMSKSFPGKTDEEYRRHLGSFGITGTLGLQKMQLLSGGQKSRVAFAALCLNNPHILVLDEPSNHLDTTGLDALVEALKNFNGGVLMVSHDISVIDSVCKEIWVSEQGTVKRFEGTIYDYRDYILQSADAAGVVKKH.

The residue at position 2 (Ala2) is an N-acetylalanine. ABC transporter domains lie at 199 to 464 and 532 to 748; these read IHID…RKNA and IQLQ…AAGV. Residues 232 to 239 and 565 to 572 each bind ATP; these read GQNGIGKS and GANGCGKT.

The protein belongs to the ABC transporter superfamily. ABCF family. EF3 subfamily. Interacts (via N-terminus) with GCN1 (via C-terminus); this interaction stimulates GCN2 kinase activity in response to amino acid starvation. The GCN1-GCN20 complex interacts with GCN2 on translating ribosomes in amino acid-starved cells; this association stimulates GCN2 kinase activation by uncharged tRNAs, and hence allowing GCN4 translational activation and derepression of amino acid biosynthetic genes. Associates with ribosomes.

Acts as a positive activator of the GCN2 protein kinase activity in response to in response to low amino acid, carbon, or purine availability. Component of the GCN1-GCN20 complex that forms a complex with GCN2 on translating ribosomes; during this process, GCN20 helps GCN1 to act as a chaperone to facilitate delivery of uncharged tRNAs that enter the A site of ribosomes to the tRNA-binding domain of GCN2, and hence stimulating GCN2 kinase activity. Participates in gene-specific mRNA translation activation, such as the transcriptional activator GCN4, by promoting the GCN2-mediated phosphorylation of eukaryotic translation initiation factor 2 (eIF-2-alpha/SUI2) on 'Ser-52', and hence allowing GCN4-mediated reprogramming of amino acid biosynthetic gene expression to alleviate nutrient depletion. This Saccharomyces cerevisiae (strain ATCC 204508 / S288c) (Baker's yeast) protein is Protein GCN20.